Reading from the N-terminus, the 499-residue chain is ALBINO3-like protein 1, chloroplastic (499 aa).

The N-terminal 45 residues, 1 to 45 (MSSTISLKPTHLILSSFSTGKVLQFRRSRFSHTPSSSSSRYRTLV), are a transit peptide targeting the chloroplast. The next 4 helical transmembrane spans lie at 115–135 (LSTV…TVLV), 184–204 (LAGI…PVWI), 263–283 (LAYL…IQIM), and 302–322 (LLPL…SLYW). Residues 378–499 (LKIPREKGGE…QQHSHETEKR (122 aa)) are disordered. Basic and acidic residues-rich tracts occupy residues 379 to 420 (KIPR…RQKA), 430 to 452 (DKAH…KKTE), and 486 to 499 (HDTE…TEKR). Residues 397–436 (GERFRLLKEQEAKRRREKEERQKAEAALSNQNTDKAHEQD) adopt a coiled-coil conformation.

Belongs to the OXA1/ALB3/YidC (TC 2.A.9.2) family. In terms of assembly, homodimer. Interacts with ALB3. Interacts with STIC2. As to expression, highly expressed in green tissues.

The protein resides in the plastid. Its subcellular location is the chloroplast thylakoid membrane. In terms of biological role, required for the insertion of some light harvesting chlorophyll-binding proteins (LHCP) into the chloroplast thylakoid membrane. Plays a role in the accumulation of some cytochrome b6f components in the thylakoid membrane. Required for the assembly and/or stability of the F(1)F(0) ATP synthase in chloroplast thylakoid membranes. Functions to stabilize or promote assembly of F(1) during its attachment to the membrane-embedded F(0) part. Participates with STIC2 in thylakoid protein targeting. May function with a specific subset of thylakoidal proteins. The chain is ALBINO3-like protein 1, chloroplastic from Arabidopsis thaliana (Mouse-ear cress).